Reading from the N-terminus, the 275-residue chain is Ribosomal RNA small subunit methyltransferase A (275 aa).

S-adenosyl-L-methionine-binding residues include asparagine 28, leucine 30, glycine 55, glutamate 77, aspartate 103, and asparagine 123.

Belongs to the class I-like SAM-binding methyltransferase superfamily. rRNA adenine N(6)-methyltransferase family. RsmA subfamily.

Its subcellular location is the cytoplasm. The catalysed reaction is adenosine(1518)/adenosine(1519) in 16S rRNA + 4 S-adenosyl-L-methionine = N(6)-dimethyladenosine(1518)/N(6)-dimethyladenosine(1519) in 16S rRNA + 4 S-adenosyl-L-homocysteine + 4 H(+). Specifically dimethylates two adjacent adenosines (A1518 and A1519) in the loop of a conserved hairpin near the 3'-end of 16S rRNA in the 30S particle. May play a critical role in biogenesis of 30S subunits. This is Ribosomal RNA small subunit methyltransferase A from Rhizobium johnstonii (strain DSM 114642 / LMG 32736 / 3841) (Rhizobium leguminosarum bv. viciae).